The chain runs to 172 residues: Hemagglutinin/amebocyte aggregation factor (172 aa).

The signal sequence occupies residues 1-19 (MNSPAIVIIIFSTLTFSEA). A run of 4 repeats spans residues 21–25 (VNDWD), 50–54 (EDRRW), 73–77 (VNDWD), and 102–106 (EDRRW). 5 cysteine pairs are disulfide-bonded: cysteine 32-cysteine 58, cysteine 67-cysteine 172, cysteine 84-cysteine 110, cysteine 111-cysteine 117, and cysteine 123-cysteine 167. 2 consecutive repeat copies span residues 129-133 (VNSWD) and 158-162 (EDRRW).

The protein belongs to the dermatopontin family.

The protein resides in the secreted. Possesses the property of inducing both aggregation of amebocytes and agglutination of erythrocytes. This is Hemagglutinin/amebocyte aggregation factor from Limulus polyphemus (Atlantic horseshoe crab).